Reading from the N-terminus, the 684-residue chain is ATP-dependent DNA helicase RecG (684 aa).

Residues 51-148 (RHIASMATLQ…ADVPQFQAPH (98 aa)) form a wedge domain region. One can recognise a Helicase ATP-binding domain in the interval 278–439 (DLARHRPMRR…VHADLEVSVI (162 aa)). Residue 291–298 (GDVGSGKT) participates in ATP binding. The DEAH box motif lies at 392-395 (DEQH).

This sequence belongs to the helicase family. RecG subfamily. As to quaternary structure, monomer.

It carries out the reaction Couples ATP hydrolysis with the unwinding of duplex DNA by translocating in the 3'-5' direction.. It catalyses the reaction ATP + H2O = ADP + phosphate + H(+). Its function is as follows. Plays a critical role in recombination and DNA repair. Helps process Holliday junction intermediates to mature products by catalyzing branch migration. Has replication fork regression activity, unwinds stalled or blocked replication forks to make a HJ that can be resolved. Has a DNA unwinding activity characteristic of a DNA helicase with 3'-5' polarity. This Acidithiobacillus ferridurans protein is ATP-dependent DNA helicase RecG.